The following is an 836-amino-acid chain: Serine/threonine-protein kinase ppk5 (836 aa).

Disordered regions lie at residues 1 to 29 (MVGLISTSETLPKQESKSSSAPVSNFLSP), 192 to 214 (INQLDETPGGTNYPMNKKKTLSS), 230 to 307 (CSQF…YKSI), and 328 to 381 (TPLD…ERQN). Composition is skewed to polar residues over residues 192–205 (INQLDETPGGTNYP), 232–241 (QFASPRSSIV), and 265–288 (KPSNFNNNIQSSSYGHASQSTKLT). The span at 289–298 (SQRDNDHQKD) shows a compositional bias: basic and acidic residues. Residues 338 to 347 (SGKKFNKNSK) are compositionally biased toward basic residues. The segment covering 353-362 (STISSYSSAS) has biased composition (low complexity). Residues 518–814 (YEIIDTVGKG…VDSALQHEFI (297 aa)) enclose the Protein kinase domain. ATP-binding positions include 524–532 (VGKGSFGQV) and Lys547. Catalysis depends on Asp644, which acts as the Proton acceptor. Tyr678 carries the phosphotyrosine modification.

Belongs to the protein kinase superfamily. CMGC Ser/Thr protein kinase family. MNB/DYRK subfamily.

It localises to the cytoplasm. The catalysed reaction is L-seryl-[protein] + ATP = O-phospho-L-seryl-[protein] + ADP + H(+). It catalyses the reaction L-threonyl-[protein] + ATP = O-phospho-L-threonyl-[protein] + ADP + H(+). In terms of biological role, has a role in meiosis. This chain is Serine/threonine-protein kinase ppk5 (ppk5), found in Schizosaccharomyces pombe (strain 972 / ATCC 24843) (Fission yeast).